Here is a 374-residue protein sequence, read N- to C-terminus: Nucleosome assembly protein 1;3 (374 aa).

Residues 26–80 (VNALKNKLQNLAGQHSDVLENLTPKIRRRVEVLREIQGKHDEIETKFREERAALE) adopt a coiled-coil conformation. Phosphoserine is present on Ser41. The Nuclear export signal signature appears at 47-62 (LTPKIRRRVEVLREIQ). The Nuclear localization signal signature appears at 222 to 227 (KKKPKK). Residues 299 to 339 (IEGEEFEIDNDDEDDIDEDEDEDEEDEDEDEEEDDEDEEEE) show a composition bias toward acidic residues. Residues 299–374 (IEGEEFEIDN…GERPPECKQQ (76 aa)) form a disordered region. Positions 343–355 (TKKKPSVLHKKGG) are enriched in basic residues. Basic and acidic residues predominate over residues 364 to 374 (QGERPPECKQQ). At Cys371 the chain carries Cysteine methyl ester. Cys371 carries the S-farnesyl cysteine lipid modification. Positions 372 to 374 (KQQ) are cleaved as a propeptide — removed in mature form.

This sequence belongs to the nucleosome assembly protein (NAP) family. In terms of assembly, can form homomeric and heteromeric protein complexes with NAP1;1, NAP1;2 and NAP1;4. Binds histone H2A and associates with chromatin in vivo. Ubiquitous.

The protein resides in the nucleus. It is found in the cytoplasm. In terms of biological role, may modulate chromatin structure by regulation of nucleosome assembly/disassembly. May function in nucleotide excision repair (NER). Involved in somatic homologous recombination. Could be involved in response to abscisic acid (ABA) and to salt stress. This chain is Nucleosome assembly protein 1;3 (NAP1;3), found in Arabidopsis thaliana (Mouse-ear cress).